We begin with the raw amino-acid sequence, 605 residues long: Isocitrate dehydrogenase kinase/phosphatase (605 aa).

Residues 327–333 and Lys-348 contribute to the ATP site; that span reads APGIKGL. Asp-383 is an active-site residue.

This sequence belongs to the AceK family.

Its subcellular location is the cytoplasm. The catalysed reaction is L-seryl-[isocitrate dehydrogenase] + ATP = O-phospho-L-seryl-[isocitrate dehydrogenase] + ADP + H(+). Bifunctional enzyme which can phosphorylate or dephosphorylate isocitrate dehydrogenase (IDH) on a specific serine residue. This is a regulatory mechanism which enables bacteria to bypass the Krebs cycle via the glyoxylate shunt in response to the source of carbon. When bacteria are grown on glucose, IDH is fully active and unphosphorylated, but when grown on acetate or ethanol, the activity of IDH declines drastically concomitant with its phosphorylation. This Burkholderia orbicola (strain MC0-3) protein is Isocitrate dehydrogenase kinase/phosphatase.